The following is a 91-amino-acid chain: RNA-binding protein Hfq (91 aa).

A Sm domain is found at 9 to 68 (DPYLNALRRERIPVSIYLVNGIKLQGQIESFDQFVILLKNTVNQMVYKHAISTVVPARSV). The disordered stretch occupies residues 68–91 (VSHHNNNHHTTPTEAVENVETQAE).

It belongs to the Hfq family. Homohexamer.

RNA chaperone that binds small regulatory RNA (sRNAs) and mRNAs to facilitate mRNA translational regulation in response to envelope stress, environmental stress and changes in metabolite concentrations. Also binds with high specificity to tRNAs. This is RNA-binding protein Hfq from Haemophilus influenzae (strain 86-028NP).